A 268-amino-acid chain; its full sequence is 5'-nucleotidase SurE (268 aa).

Positions 24, 25, 55, and 111 each coordinate a divalent metal cation.

Belongs to the SurE nucleotidase family. It depends on a divalent metal cation as a cofactor.

It localises to the cytoplasm. It catalyses the reaction a ribonucleoside 5'-phosphate + H2O = a ribonucleoside + phosphate. Functionally, nucleotidase that shows phosphatase activity on nucleoside 5'-monophosphates. This chain is 5'-nucleotidase SurE, found in Deinococcus radiodurans (strain ATCC 13939 / DSM 20539 / JCM 16871 / CCUG 27074 / LMG 4051 / NBRC 15346 / NCIMB 9279 / VKM B-1422 / R1).